Here is a 656-residue protein sequence, read N- to C-terminus: Protein sly1 homolog (656 aa).

A run of 4 repeats spans residues 85 to 121 (DENL…NLAA), 203 to 245 (RNSA…FSFQ), 419 to 456 (LELL…ERLR), and 460 to 496 (QSAG…GGGT). The 4 X approximate repeats stretch occupies residues 85-496 (DENLDRIQQD…QATQYEGGGT (412 aa)).

It belongs to the STXBP/unc-18/SEC1 family.

It is found in the cytoplasm. It localises to the membrane. Functionally, non-vital for development. The chain is Protein sly1 homolog (Slh) from Drosophila virilis (Fruit fly).